Here is a 471-residue protein sequence, read N- to C-terminus: 5-hydroxytryptamine receptor 2A (471 aa).

Residues 1-80 (MDILCEENTS…LQEKNWSALL (80 aa)) are Extracellular-facing. N-linked (GlcNAc...) asparagine glycans are attached at residues Asn-8, Asn-38, Asn-44, Asn-51, and Asn-54. A helical membrane pass occupies residues 81 to 97 (TAVVIILTIAGNILVIM). Over 98 to 111 (AVSLEKKLQNATNY) the chain is Cytoplasmic. A helical membrane pass occupies residues 112-137 (FLMSLAIADMLLGFLVMPVSMLTILY). Residues 138-146 (GYRWPLPSK) are Extracellular-facing. The helical transmembrane segment at 147-171 (LCAVWIYLDVLFSTASIMHLCAISL) threads the bilayer. A disulfide bond links Cys-148 and Cys-227. Asp-155 contacts serotonin. The DRY motif; important for ligand-induced conformation changes signature appears at 172–174 (DRY). At 172–191 (DRYVAIQNPIHHSRFNSRTK) the chain is on the cytoplasmic side. A helical membrane pass occupies residues 192-215 (AFLKIIAVWTISVGISMPIPVFGL). Residues 216-232 (QDDSKVFKEGSCLLADD) are Extracellular-facing. The chain crosses the membrane as a helical span at residues 233-258 (NFVLIGSFVSFFIPLTIMVITYFLTI). The Cytoplasmic portion of the chain corresponds to 259-322 (KSLQKEATLC…QSISNEQKAC (64 aa)). The residue at position 280 (Ser-280) is a Phosphoserine. A helical membrane pass occupies residues 323 to 348 (KVLGIVFFLFVVMWCPFFITNIMAVI). Asn-343 serves as a coordination point for serotonin. A disulfide bridge connects residues Cys-349 and Cys-353. The Extracellular segment spans residues 349–356 (CKESCNED). A helical membrane pass occupies residues 357-382 (VIGALLNVFVWIGYLSSAVNPLVYTL). The NPxxY motif; important for ligand-induced conformation changes and signaling motif lies at 376-380 (NPLVY). Topologically, residues 383 to 471 (FNKTYRSAFS…DGVNEKVSCV (89 aa)) are cytoplasmic. The tract at residues 450–471 (KQHSEDASKDNSDGVNEKVSCV) is disordered. Positions 451 to 465 (QHSEDASKDNSDGVN) are enriched in basic and acidic residues. Positions 469–471 (SCV) match the PDZ-binding motif.

Belongs to the G-protein coupled receptor 1 family. As to quaternary structure, interacts (via C-terminus) with MPDZ and PATJ. May interact (via C-terminus) with MPP3, PRDX6, DLG4, DLG1, CASK, APBA1 and MAGI2. Interacts with GRM2 and DRD2; this may affect signaling.

It is found in the cell membrane. The protein resides in the cell projection. Its subcellular location is the dendrite. It localises to the axon. The protein localises to the cytoplasmic vesicle. It is found in the membrane. The protein resides in the caveola. Its subcellular location is the presynapse. With respect to regulation, G-protein coupled receptor activity is regulated by lipids: oleamide increases HTR2A-mediated activity. G-protein coupled receptor for 5-hydroxytryptamine (serotonin). Also functions as a receptor for various drugs and psychoactive substances, including mescaline, psilocybin, 1-(2,5-dimethoxy-4-iodophenyl)-2-aminopropane (DOI) and lysergic acid diethylamide (LSD). Ligand binding causes a conformation change that triggers signaling via guanine nucleotide-binding proteins (G proteins) and modulates the activity of downstream effectors. HTR2A is coupled to G(q)/G(11) G alpha proteins and activates phospholipase C-beta, releasing diacylglycerol (DAG) and inositol 1,4,5-trisphosphate (IP3) second messengers that modulate the activity of phosphatidylinositol 3-kinase and promote the release of Ca(2+) ions from intracellular stores, respectively. Beta-arrestin family members inhibit signaling via G proteins and mediate activation of alternative signaling pathways. Affects neural activity, perception, cognition and mood. Plays a role in the regulation of behavior, including responses to anxiogenic situations and psychoactive substances. Plays a role in intestinal smooth muscle contraction, and may play a role in arterial vasoconstriction. This chain is 5-hydroxytryptamine receptor 2A (HTR2A), found in Macaca mulatta (Rhesus macaque).